Consider the following 210-residue polypeptide: uncharacterized protein (210 aa).

This is an uncharacterized protein from Escherichia coli (strain K12).